Consider the following 583-residue polypeptide: Vivapain-1 (583 aa).

At 1 to 34 the chain is on the cytoplasmic side; it reads MAQDIKIMNLTKSSLEALNRNQMLSKKSSRKILK. A propeptide spans 1–338 (activation peptide); it reads MAQDIKIMNL…SSSGANLLAD (338 aa). The helical; Signal-anchor for type II membrane protein transmembrane segment at 35–55 threads the bilayer; the sequence is ICMYAILTFAMCGVVLICLTA. Residues 56-583 lie on the Lumenal side of the membrane; the sequence is MSNSDGSLTQ…IGVEVFYPIL (528 aa). Positions 62–82 are enriched in polar residues; the sequence is SLTQSGSHNQSGSLKGLSSTP. 2 disordered regions span residues 62-83 and 104-125; these read SLTQ…STPG and PHGN…ALPN. The N-linked (GlcNAc...) asparagine glycan is linked to Asn70. The segment covering 106-119 has biased composition (basic and acidic residues); sequence GNRDPTGDDVEKPA. Asn195 and Asn272 each carry an N-linked (GlcNAc...) asparagine glycan. Intrachain disulfides connect Cys360–Cys402, Cys395–Cys435, and Cys420–Cys440. The active site involves Cys363. Residue Asn381 is glycosylated (N-linked (GlcNAc...) asparagine). N-linked (GlcNAc...) asparagine glycosylation is found at Asn486 and Asn494. Cysteines 489 and 572 form a disulfide. Active-site residues include His495 and Asn547.

The protein belongs to the peptidase C1 family.

It is found in the membrane. Functionally, cysteine protease. The chain is Vivapain-1 from Plasmodium vivax (strain Salvador I).